The following is a 399-amino-acid chain: Probable sugar efflux transporter (399 aa).

Transmembrane regions (helical) follow at residues 15 to 35 (VVTL…PVGL), 50 to 70 (VGMM…PFML), 81 to 101 (LIGL…AWNF), 103 to 123 (VLVI…SITS), 136 to 156 (AQAL…GIPI), 168 to 188 (MTFL…VKLL), 209 to 229 (PALV…YTAY), 246 to 266 (FATV…ILFG), 273 to 293 (ASGL…LLLP), 301 to 321 (LMLL…GMQV), 333 to 353 (VAMS…ALVG), and 364 to 384 (SVGY…LMIF).

The protein belongs to the major facilitator superfamily. SotB (TC 2.A.1.2) family.

It is found in the cell inner membrane. In terms of biological role, involved in the efflux of sugars. The physiological role may be the reduction of the intracellular concentration of toxic sugars or sugar metabolites. The chain is Probable sugar efflux transporter from Klebsiella pneumoniae subsp. pneumoniae (strain ATCC 700721 / MGH 78578).